Here is a 755-residue protein sequence, read N- to C-terminus: MRRLLTGCLLSSARPLKSRLPLLMSSSLPSSAGKKPKQATLARFFTSMKNKPTEGTPSPKKSSKHMLEDRMDNVSGEEEYATKKLKQTAVTHTVAAPSSMGSNFSSIPSSAPSSGVADSPQQSQRLVGEVEDALSSNNNDHYSSNIPYSEVCEVFNKIEAISSRLEIIRICSDFFIKIMKQSSKNLIPTTYLFINRLGPDYEAGLELGLGENLLMKTISETCGKSMSQIKLKYKDIGDLGEIAMGARNVQPTMFKPKPLTVGEVFKNLRAIAKTQGKDSQLKKMKLIKRMLTACKGIEAKFLIRSLESKLRIGLAEKTVLISLSKALLLHDENREDSPDKDVPMDVLESAQQKIRDAFCQVPNYEIVINSCLEHGIMNLDKYCTLRPGIPLKPMLAKPTKAINEVLDRFQGETFTSEYKYDGERAQVHLLNDGTMRIYSRNGENMTERYPEINITDFIQDLDTTKNLILDCEAVAWDKDQGKILPFQVLSTRKRKDVELNDVKVKVCLFAFDILCYNDERLINKSLKERREYLTKVTKVVPGEFQYATQITTNNLDELQKFLDESVNHSCEGLMVKMLEGPESHYEPSKRSRNWLKLKKDYLEGVGDSLDLCVLGAYYGRGKRTGTYGGFLLGCYNQDTGEFETCCKIGTGFSDEMLQLLHDRLTPTIIDGPKATFVFDSSAEPDVWFEPTTLFEVLTADLSLSPIYKAGSATFDKGVSLRFPRFLRIREDKGVEDATSSDQIVELYENQSHMQN.

The N-terminal 44 residues, 1–44 (MRRLLTGCLLSSARPLKSRLPLLMSSSLPSSAGKKPKQATLARF), are a transit peptide targeting the mitochondrion. The residue at position 2 (Arg2) is an N-acetylserine. Over residues 47–60 (SMKNKPTEGTPSPK) the composition is skewed to polar residues. 2 disordered regions span residues 47–79 (SMKNKPTEGTPSPKKSSKHMLEDRMDNVSGEEE) and 97–127 (PSSMGSNFSSIPSSAPSSGVADSPQQSQRLV). Phosphoserine is present on residues Ser58 and Ser75. Over residues 102–114 (SNFSSIPSSAPSS) the composition is skewed to low complexity. Phosphoserine occurs at positions 119 and 123. Residues 309 to 318 (KLRIGLAEKT) form an interaction with target DNA region. An ATP-binding site is contributed by Glu417. Lys419 functions as the N6-AMP-lysine intermediate in the catalytic mechanism. The ATP site is built by Arg424 and Arg440. Mg(2+) is bound at residue Glu472. The interval 493 to 495 (KRK) is interaction with target DNA. Position 571 (Glu571) interacts with Mg(2+). ATP-binding residues include Lys576, Arg590, and Lys596.

This sequence belongs to the ATP-dependent DNA ligase family. Requires Mg(2+) as cofactor.

It localises to the mitochondrion. Its subcellular location is the nucleus. The catalysed reaction is ATP + (deoxyribonucleotide)n-3'-hydroxyl + 5'-phospho-(deoxyribonucleotide)m = (deoxyribonucleotide)n+m + AMP + diphosphate.. Its function is as follows. DNA ligase that seals nicks in double-stranded DNA during DNA replication, DNA recombination and DNA repair. The mitochondrial form is required for mitochondrial DNA maintenance but is non-essential while the nuclear form is essential for cell viability. The protein is DNA ligase 1 (CDC9) of Saccharomyces cerevisiae (strain ATCC 204508 / S288c) (Baker's yeast).